Reading from the N-terminus, the 181-residue chain is ATP-dependent protease subunit HslV (181 aa).

Thr-7 is a catalytic residue. 3 residues coordinate Na(+): Ala-166, Cys-169, and Thr-172.

It belongs to the peptidase T1B family. HslV subfamily. A double ring-shaped homohexamer of HslV is capped on each side by a ring-shaped HslU homohexamer. The assembly of the HslU/HslV complex is dependent on binding of ATP.

It localises to the cytoplasm. It catalyses the reaction ATP-dependent cleavage of peptide bonds with broad specificity.. Allosterically activated by HslU binding. In terms of biological role, protease subunit of a proteasome-like degradation complex believed to be a general protein degrading machinery. This is ATP-dependent protease subunit HslV from Anaeromyxobacter dehalogenans (strain 2CP-1 / ATCC BAA-258).